Here is a 185-residue protein sequence, read N- to C-terminus: Ribosome-recycling factor (185 aa).

This sequence belongs to the RRF family.

The protein resides in the cytoplasm. Responsible for the release of ribosomes from messenger RNA at the termination of protein biosynthesis. May increase the efficiency of translation by recycling ribosomes from one round of translation to another. This Pseudomonas paraeruginosa (strain DSM 24068 / PA7) (Pseudomonas aeruginosa (strain PA7)) protein is Ribosome-recycling factor.